Here is a 239-residue protein sequence, read N- to C-terminus: Small ribosomal subunit protein uS2 (239 aa).

Belongs to the universal ribosomal protein uS2 family.

This chain is Small ribosomal subunit protein uS2, found in Parasynechococcus marenigrum (strain WH8102).